The following is a 161-amino-acid chain: Bacterial E2-like ubiquitin protein BilB (161 aa).

Catalysis depends on cysteine 113, which acts as the Glycyl thioester intermediate.

In terms of biological role, component of the Bil (bacterial ISG15-like) antiviral defense system, composed of BilA, BilB, BilC and BilD. The Bil system specifically conjugates a ubiquitin-like moiety (bilA) to the bacteriophage central tail fiber (CTF, or tip attachment protein J) via reactions involving E1 (bilD) and E2 (bilB). Modifies CTF of phage SECphi27 and SECphi4, which probably interferes with assembly of the phage tail. Also modifies T5 baseplate hub protein pb3 (gene D16), but not gp27 of phage T6 (Bil defends against T6). BilB probably accepts ubiquitin from the BilA-BilD (E1) complex and catalyzes its covalent attachment to target protein (CTF). Bil-encoding bacteria produce mostly defective phage SECphi27, many of which have phage assembly defects, including no tails. SECphi27 phage progeny produced in E.coli with the Bil system inject less DNA into naive host cells, maybe because the phage are less able to adsorb and inject their DNA into host cells. Functionally, expression of the Bil system in E.coli (strain MG1655) confers about 100-fold resistance to phage SECphi27, SECphi18, SECphi6, SECphi4 and T5, but not to SECphi17. When cells expressing the Bil system are infected by phage SECphi27 at low multiplicity of infection (0.03 MOI) the culture survives, at 3.0 MOI the culture collapses at the same time as cells without the Bil system. This is Bacterial E2-like ubiquitin protein BilB from Collimonas sp. (strain OK412).